The following is a 142-amino-acid chain: Large ribosomal subunit protein uL13 (142 aa).

It belongs to the universal ribosomal protein uL13 family. Part of the 50S ribosomal subunit.

Its function is as follows. This protein is one of the early assembly proteins of the 50S ribosomal subunit, although it is not seen to bind rRNA by itself. It is important during the early stages of 50S assembly. The sequence is that of Large ribosomal subunit protein uL13 from Psychromonas ingrahamii (strain DSM 17664 / CCUG 51855 / 37).